The chain runs to 188 residues: NADH-quinone oxidoreductase subunit B 1 (188 aa).

The [4Fe-4S] cluster site is built by Cys39, Cys40, Cys105, and Cys134.

It belongs to the complex I 20 kDa subunit family. As to quaternary structure, NDH-1 is composed of 14 different subunits. Subunits NuoB, C, D, E, F, and G constitute the peripheral sector of the complex. The cofactor is [4Fe-4S] cluster.

It is found in the cell inner membrane. The enzyme catalyses a quinone + NADH + 5 H(+)(in) = a quinol + NAD(+) + 4 H(+)(out). Its function is as follows. NDH-1 shuttles electrons from NADH, via FMN and iron-sulfur (Fe-S) centers, to quinones in the respiratory chain. The immediate electron acceptor for the enzyme in this species is believed to be ubiquinone. Couples the redox reaction to proton translocation (for every two electrons transferred, four hydrogen ions are translocated across the cytoplasmic membrane), and thus conserves the redox energy in a proton gradient. The chain is NADH-quinone oxidoreductase subunit B 1 from Solibacter usitatus (strain Ellin6076).